Consider the following 263-residue polypeptide: Outer membrane lipoprotein 3 (263 aa).

The N-terminal stretch at 1–19 (MKIMKLAGAVAIFSLFLTA) is a signal peptide. C20 is lipidated: N-palmitoyl cysteine. A lipid anchor (S-diacylglycerol cysteine) is attached at C20.

Belongs to the NlpA lipoprotein family.

The protein localises to the cell outer membrane. This chain is Outer membrane lipoprotein 3 (plpC), found in Mannheimia haemolytica (Pasteurella haemolytica).